The sequence spans 61 residues: Photosystem II assembly protein Psb34 (61 aa).

The chain crosses the membrane as a helical span at residues 36 to 56; it reads LIMAAITVVLVAGLIAVAVVA.

Belongs to the Psb34 family. As to quaternary structure, part of the photosystem II (PSII) assembly intermediate RC47 complex (with D1, D2, CP47, PsbE, PsbF, PsbH, Psb27 and Psb28); minor amounts are found in other PSII complexes, including mature, dimeric PSII with PsbO and PsbV. No HliA or HliB are detected in any of these complexes. Its interaction with PSII requires both CP47 (psbB) and PsbH. HliA/HliB and Psb34 probably bind to a similar site on CP47; their binding seems to be mutually exclusive.

Its subcellular location is the cellular thylakoid membrane. In terms of biological role, involved in photosystem II (PSII) assembly and/or repair. Probably involved in conversion of late PSII assembly intermediates into mature dimeric PSII, it may mediate the optimal equlibrium of HliA/HliB among the intermediates containing CP47 (psbB) to facilitate photoprotection during assembly. The chain is Photosystem II assembly protein Psb34 from Synechocystis sp. (strain ATCC 27184 / PCC 6803 / Kazusa).